A 1356-amino-acid chain; its full sequence is Pleckstrin homology domain-containing family H member 1 (1356 aa).

Positions Phe-27 to Thr-172 form a coiled coil. Disordered stretches follow at residues Val-179–Ser-203, His-256–Arg-314, and Leu-354–His-414. 3 stretches are compositionally biased toward polar residues: residues Pro-194 to Ser-203, His-256 to Gln-265, and Val-285 to Thr-297. A coiled-coil region spans residues Ser-359–Lys-407. Composition is skewed to basic and acidic residues over residues Ser-362 to Met-377 and Lys-385 to Leu-399. At Ser-451 the chain carries Phosphoserine. PH domains follow at residues Ala-572–Lys-666 and Lys-681–Gly-790. At Ser-739 the chain carries Phosphoserine. In terms of domain architecture, MyTH4 spans Tyr-826–Leu-980. Residues Phe-991–Ser-1327 enclose the FERM domain.

In Mus musculus (Mouse), this protein is Pleckstrin homology domain-containing family H member 1 (Plekhh1).